An 82-amino-acid polypeptide reads, in one-letter code: MVTIRLSRGGSKKRPFYHLNVADSRRARDGRYIERLGFFNPVARGQEERLRIDLDRVNHWVSQGAQLSDRAAQLVKDASKNA.

Belongs to the bacterial ribosomal protein bS16 family.

This chain is Small ribosomal subunit protein bS16, found in Marinomonas sp. (strain MWYL1).